Here is a 353-residue protein sequence, read N- to C-terminus: Histidinol-phosphate aminotransferase 1 (353 aa).

An N6-(pyridoxal phosphate)lysine modification is found at K211.

It belongs to the class-II pyridoxal-phosphate-dependent aminotransferase family. Histidinol-phosphate aminotransferase subfamily. Homodimer. The cofactor is pyridoxal 5'-phosphate.

It carries out the reaction L-histidinol phosphate + 2-oxoglutarate = 3-(imidazol-4-yl)-2-oxopropyl phosphate + L-glutamate. The protein operates within amino-acid biosynthesis; L-histidine biosynthesis; L-histidine from 5-phospho-alpha-D-ribose 1-diphosphate: step 7/9. The chain is Histidinol-phosphate aminotransferase 1 (hisC1) from Nostoc sp. (strain PCC 7120 / SAG 25.82 / UTEX 2576).